The sequence spans 944 residues: Valine--tRNA ligase (944 aa).

The short motif at 43–53 (PNVTGTLHMGH) is the 'HIGH' region element. A 'KMSKS' region motif is present at residues 550 to 554 (KMSKS). Residue Lys553 coordinates ATP. Residues 878–944 (LVDMDAERTR…TGLREQRAKL (67 aa)) are a coiled coil.

This sequence belongs to the class-I aminoacyl-tRNA synthetase family. ValS type 1 subfamily. As to quaternary structure, monomer.

The protein localises to the cytoplasm. It catalyses the reaction tRNA(Val) + L-valine + ATP = L-valyl-tRNA(Val) + AMP + diphosphate. Its function is as follows. Catalyzes the attachment of valine to tRNA(Val). As ValRS can inadvertently accommodate and process structurally similar amino acids such as threonine, to avoid such errors, it has a 'posttransfer' editing activity that hydrolyzes mischarged Thr-tRNA(Val) in a tRNA-dependent manner. The chain is Valine--tRNA ligase from Xanthomonas campestris pv. campestris (strain B100).